Reading from the N-terminus, the 372-residue chain is Chorismate synthase (372 aa).

Arg48 lines the NADP(+) pocket. Residues 125–127, Gly285, 300–304, and Arg327 contribute to the FMN site; these read RSS and KPTPS.

It belongs to the chorismate synthase family. It depends on FMNH2 as a cofactor.

The enzyme catalyses 5-O-(1-carboxyvinyl)-3-phosphoshikimate = chorismate + phosphate. Its pathway is metabolic intermediate biosynthesis; chorismate biosynthesis; chorismate from D-erythrose 4-phosphate and phosphoenolpyruvate: step 7/7. Its function is as follows. Catalyzes the anti-1,4-elimination of the C-3 phosphate and the C-6 proR hydrogen from 5-enolpyruvylshikimate-3-phosphate (EPSP) to yield chorismate, which is the branch point compound that serves as the starting substrate for the three terminal pathways of aromatic amino acid biosynthesis. This reaction introduces a second double bond into the aromatic ring system. This Methanocella arvoryzae (strain DSM 22066 / NBRC 105507 / MRE50) protein is Chorismate synthase.